The following is a 207-amino-acid chain: Outer-membrane lipoprotein carrier protein (207 aa).

The first 22 residues, 1–22 (MKLSEKFCVFLFFLLFTSTTHA), serve as a signal peptide directing secretion.

The protein belongs to the LolA family. As to quaternary structure, monomer.

It is found in the periplasm. Its function is as follows. Participates in the translocation of lipoproteins from the inner membrane to the outer membrane. Only forms a complex with a lipoprotein if the residue after the N-terminal Cys is not an aspartate (The Asp acts as a targeting signal to indicate that the lipoprotein should stay in the inner membrane). The protein is Outer-membrane lipoprotein carrier protein of Nitrosospira multiformis (strain ATCC 25196 / NCIMB 11849 / C 71).